Consider the following 708-residue polypeptide: DNA ligase (708 aa).

Residues aspartate 35–aspartate 39, serine 84–leucine 85, and glutamate 118 contribute to the NAD(+) site. Lysine 120 (N6-AMP-lysine intermediate) is an active-site residue. NAD(+) contacts are provided by arginine 141, glutamate 182, lysine 303, and lysine 327. Zn(2+) is bound by residues cysteine 419, cysteine 422, cysteine 437, and cysteine 443. Residues threonine 628–glutamine 708 form the BRCT domain.

It belongs to the NAD-dependent DNA ligase family. LigA subfamily. It depends on Mg(2+) as a cofactor. The cofactor is Mn(2+).

The enzyme catalyses NAD(+) + (deoxyribonucleotide)n-3'-hydroxyl + 5'-phospho-(deoxyribonucleotide)m = (deoxyribonucleotide)n+m + AMP + beta-nicotinamide D-nucleotide.. Functionally, DNA ligase that catalyzes the formation of phosphodiester linkages between 5'-phosphoryl and 3'-hydroxyl groups in double-stranded DNA using NAD as a coenzyme and as the energy source for the reaction. It is essential for DNA replication and repair of damaged DNA. The chain is DNA ligase from Rhizorhabdus wittichii (strain DSM 6014 / CCUG 31198 / JCM 15750 / NBRC 105917 / EY 4224 / RW1) (Sphingomonas wittichii).